A 509-amino-acid polypeptide reads, in one-letter code: Subtelomeric hrmA-associated cluster protein AFUA_5G14880 (509 aa).

Part of the subtelomeric hrmA-associated cluster (HAC) containing genes that alter the hyphal surface (such as reduced total chitin or increased beta-glucan exposure) and perturb inter-hyphal interactions within the developing biofilms, resulting in a loss of vertically aligned polarized growing filaments. Consequently, this hypoxia-typic morphotype (called H-MORPH) with altered biofilm architecture leads to increased hypoxia fitness, increased host inflammation, rapid disease progression, and mortality in a murine model of invasive aspergillosis. This is Subtelomeric hrmA-associated cluster protein AFUA_5G14880 from Aspergillus fumigatus (strain ATCC MYA-4609 / CBS 101355 / FGSC A1100 / Af293) (Neosartorya fumigata).